The sequence spans 383 residues: Acetylornithine deacetylase (383 aa).

Residue histidine 80 coordinates Zn(2+). Aspartate 82 is an active-site residue. Position 112 (aspartate 112) interacts with Zn(2+). Glutamate 144 is a catalytic residue. Residues glutamate 145, glutamate 169, and histidine 355 each contribute to the Zn(2+) site.

The protein belongs to the peptidase M20A family. ArgE subfamily. In terms of assembly, homodimer. The cofactor is Zn(2+). It depends on Co(2+) as a cofactor. Glutathione is required as a cofactor.

It is found in the cytoplasm. The enzyme catalyses N(2)-acetyl-L-ornithine + H2O = L-ornithine + acetate. It functions in the pathway amino-acid biosynthesis; L-arginine biosynthesis; L-ornithine from N(2)-acetyl-L-ornithine (linear): step 1/1. Its function is as follows. Catalyzes the hydrolysis of the amide bond of N(2)-acetylated L-amino acids. Cleaves the acetyl group from N-acetyl-L-ornithine to form L-ornithine, an intermediate in L-arginine biosynthesis pathway, and a branchpoint in the synthesis of polyamines. This is Acetylornithine deacetylase from Shigella boydii serotype 4 (strain Sb227).